The primary structure comprises 333 residues: Type II secretion system protein K (333 aa).

A propeptide spans 1–7 (MRRGQNG) (leader sequence). A helical transmembrane segment spans residues 8–29 (VALITVLLVVAVVTIVCAGLII). Residues 30-333 (RQQLAIRSSA…GGDDWKKDER (304 aa)) are Periplasmic-facing. The segment at 313–333 (MGQGGLPIPSTGGDDWKKDER) is disordered.

The protein belongs to the GSP K family. As to quaternary structure, type II secretion is composed of four main components: the outer membrane complex, the inner membrane complex, the cytoplasmic secretion ATPase and the periplasm-spanning pseudopilus. Interacts with the tip of the type II pseudopilus subunits XcpV, XcpU and XcpW. Interacts with core component XcpT. In terms of processing, cleaved by prepilin peptidase.

The protein resides in the cell inner membrane. Component of the type II secretion system required for the energy-dependent secretion of extracellular factors such as proteases and toxins from the periplasm. Plays a role in pseudopilus assembly and seems to control its length. Interacts with the pseudopilus tip complex that is critical for the recognition and binding of secretion substrates. Type II pseudopilus confers increased bacterial adhesive capabilities. This Pseudomonas aeruginosa (strain ATCC 15692 / DSM 22644 / CIP 104116 / JCM 14847 / LMG 12228 / 1C / PRS 101 / PAO1) protein is Type II secretion system protein K (xcpX).